Consider the following 67-residue polypeptide: Protein AaeX (67 aa).

A run of 2 helical transmembrane segments spans residues L3 to L23 and F43 to S63.

The protein belongs to the AaeX family.

The protein localises to the cell membrane. This is Protein AaeX from Cronobacter sakazakii (strain ATCC BAA-894) (Enterobacter sakazakii).